The primary structure comprises 313 residues: CBK1 kinase activator protein MOB2 (313 aa).

A disordered region spans residues 1–109 (MSFLNTIRGL…KRSSIQTTKS (109 aa)). Positions 23-69 (PSNNAIYSHSNLSGNGLRRTQSPTKFSPSKLSSKGAQGSAAYTSSPT) are enriched in polar residues. A phosphoserine; by CDC28 mark is found at S44, S51, S67, and S97. Residues 76–97 (QSLQHQDSQSSLQYQQQSGSVS) are compositionally biased toward low complexity. A compositionally biased stretch (polar residues) spans 98 to 109 (PSKRSSIQTTKS).

Belongs to the MOB1/phocein family. In terms of assembly, interacts with protein kinase CBK1 to form the RAM CBK1-MOB2 kinase complex. Post-translationally, phosphorylated by CDC28 at Ser-44, Ser-51, Ser-67, and Ser-97. Phosphorylation occurs during bud emergence and is maintained until the G2/M transition. Dephosphorylated at the end of mitosis. Phosphorylation is required for the maintenance of polarisome components in hyphae.

It is found in the nucleus. Its subcellular location is the cytoplasm. In terms of biological role, functions as an activator subunit for the CBK1 protein kinase. Part of the regulation of ACE2 activity and cellular morphogenesis (RAM) signaling network. The RAM network is critically required for hyphal growth as well as normal vegetative growth, and for polarization of lipid rafts and the actin cytoskeleton. It play an essential role in biofilm formation. The RAM network also plays a role in serum- and antifungal azoles-induced activation of ergosterol biosynthesis genes, especially those involved in the late steps of ergosterol biosynthesis. In Candida albicans (strain SC5314 / ATCC MYA-2876) (Yeast), this protein is CBK1 kinase activator protein MOB2 (MOB2).